Reading from the N-terminus, the 255-residue chain is 5-oxoprolinase subunit A (255 aa).

Belongs to the LamB/PxpA family. Forms a complex composed of PxpA, PxpB and PxpC.

It catalyses the reaction 5-oxo-L-proline + ATP + 2 H2O = L-glutamate + ADP + phosphate + H(+). In terms of biological role, catalyzes the cleavage of 5-oxoproline to form L-glutamate coupled to the hydrolysis of ATP to ADP and inorganic phosphate. This Rhodopseudomonas palustris (strain BisA53) protein is 5-oxoprolinase subunit A.